The chain runs to 198 residues: MIKKSAAILAGGKSSRMNYINKAFLKYEENYFIERIIKALEDYEEIIIISNNPEEYTEFGLKVFKDIYPSQGPLSGIHSALNYIKNDYCLVVACDMPFINKEVVNYLGNIKEDYEILIPKFQERLQPLCAIYKKSCKDIMEKELINNSNKLIKTCFKFSMKVVEEFPFIEKIHKKEIKNFYNINTVHEYEDLIRKKEI.

Residues 9–11 (LAG), K22, D66, and D95 contribute to the GTP site. A Mg(2+)-binding site is contributed by D95.

Belongs to the MobA family. The cofactor is Mg(2+).

The protein localises to the cytoplasm. It catalyses the reaction Mo-molybdopterin + GTP + H(+) = Mo-molybdopterin guanine dinucleotide + diphosphate. Transfers a GMP moiety from GTP to Mo-molybdopterin (Mo-MPT) cofactor (Moco or molybdenum cofactor) to form Mo-molybdopterin guanine dinucleotide (Mo-MGD) cofactor. The protein is Probable molybdenum cofactor guanylyltransferase of Clostridium perfringens (strain SM101 / Type A).